A 410-amino-acid polypeptide reads, in one-letter code: Chaperonin GroEL (410 aa).

ATP contacts are provided by residues 29–32 (TAGP), lysine 50, and 86–90 (DGTTT).

Belongs to the chaperonin (HSP60) family. Forms a cylinder of 14 subunits composed of two heptameric rings stacked back-to-back. Interacts with the co-chaperonin GroES.

The protein localises to the cytoplasm. It catalyses the reaction ATP + H2O + a folded polypeptide = ADP + phosphate + an unfolded polypeptide.. Together with its co-chaperonin GroES, plays an essential role in assisting protein folding. The GroEL-GroES system forms a nano-cage that allows encapsulation of the non-native substrate proteins and provides a physical environment optimized to promote and accelerate protein folding. The polypeptide is Chaperonin GroEL (Ehrlichia canis).